Here is a 229-residue protein sequence, read N- to C-terminus: Enolase-phosphatase E1 (229 aa).

This sequence belongs to the HAD-like hydrolase superfamily. MasA/MtnC family. Monomer. It depends on Mg(2+) as a cofactor.

The catalysed reaction is 5-methylsulfanyl-2,3-dioxopentyl phosphate + H2O = 1,2-dihydroxy-5-(methylsulfanyl)pent-1-en-3-one + phosphate. It functions in the pathway amino-acid biosynthesis; L-methionine biosynthesis via salvage pathway; L-methionine from S-methyl-5-thio-alpha-D-ribose 1-phosphate: step 3/6. The protein operates within amino-acid biosynthesis; L-methionine biosynthesis via salvage pathway; L-methionine from S-methyl-5-thio-alpha-D-ribose 1-phosphate: step 4/6. Its function is as follows. Bifunctional enzyme that catalyzes the enolization of 2,3-diketo-5-methylthiopentyl-1-phosphate (DK-MTP-1-P) into the intermediate 2-hydroxy-3-keto-5-methylthiopentenyl-1-phosphate (HK-MTPenyl-1-P), which is then dephosphorylated to form the acireductone 1,2-dihydroxy-3-keto-5-methylthiopentene (DHK-MTPene). The polypeptide is Enolase-phosphatase E1 (Erwinia tasmaniensis (strain DSM 17950 / CFBP 7177 / CIP 109463 / NCPPB 4357 / Et1/99)).